Consider the following 1020-residue polypeptide: Neurofilament heavy polypeptide (1020 aa).

Positions 1–100 (MMSFGGADAL…VATSRSEKEQ (100 aa)) are head. Residues 58 to 83 (VSASPSRFRGAGAASSTDSLDTLSNG) are disordered. Positions 71-82 (ASSTDSLDTLSN) are enriched in polar residues. 2 positions are modified to phosphoserine: Ser-76 and Ser-124. The IF rod domain maps to 97–413 (EKEQLQALND…KLLEGEECRI (317 aa)). Positions 101–132 (LQALNDRFAGYIDKVRQLEAHNRSLEGEAAAL) are coil 1A. The tract at residues 133–145 (RQQQAGRSAMGEL) is linker 1. The interval 146–244 (YEREVREMRG…QEEVGELLGQ (99 aa)) is coil 1B. Residues 245–266 (IQGSGAAQAQMQAETRDALKCD) are linker 12. The tract at residues 267-288 (VTSALREIRAQLEGHAVQSTLQ) is coil 2A. Positions 289–292 (SEEW) are linker 2. The interval 293 to 413 (FRVRLDRLSE…KLLEGEECRI (121 aa)) is coil 2B. 2 positions are modified to phosphoserine: Ser-347 and Ser-421. Residues 414–1020 (GFGPIPFSLP…ATEDKAAKGK (607 aa)) form a tail region. The segment at 456 to 1020 (IVEEQTEETQ…ATEDKAAKGK (565 aa)) is disordered. Composition is skewed to acidic residues over residues 459–475 (EQTE…EEEE) and 483–498 (GKEE…EGGE). Ser-511, Ser-526, Ser-532, Ser-540, Ser-546, Ser-552, Ser-560, Ser-566, Ser-574, Ser-580, Ser-586, Ser-594, Ser-600, Ser-606, Ser-614, Ser-620, Ser-628, Ser-634, Ser-640, Ser-648, Ser-654, Ser-662, Ser-668, Ser-676, Ser-682, Ser-690, Ser-696, and Ser-704 each carry phosphoserine. Residues 511–1020 (SPEKEAKSPV…ATEDKAAKGK (510 aa)) are compositionally biased toward basic and acidic residues. 4 tandem repeats follow at residues 525 to 530 (KSPAEA), 531 to 536 (KSPEKE), 539 to 544 (KSPAEV), and 545 to 550 (KSPEKA). Residues 525–826 (KSPAEAKSPE…KEEVKSPVKE (302 aa)) are 30 X 6 AA repeats of K-S-P-[AEPV]-[EAK]-[AEVK]. The stretch at 559–564 (KSPPEA) is repeat 5. Repeat copies occupy residues 573 to 578 (KSPAEV) and 579 to 584 (KSPEKA). 2 consecutive repeat copies span residues 593 to 598 (KSPAEA) and 599 to 604 (KSPEKA). The stretch at 613–618 (KSPAEA) is repeat 10. 4 consecutive repeat copies span residues 627–632 (KSPAEV), 633–638 (KSPEKA), 639–644 (KSPTKE), and 647–652 (KSPEKA). Tandem repeats lie at residues 661–666 (KSPEKA), 667–672 (KSPVKA), 675–680 (KSPEKA), 681–686 (KSPVKA), 689–694 (KSPEKA), 695–700 (KSPVKE), 703–708 (KSPEKA), 709–714 (KSPVKE), 717–722 (KSPEKA), 723–728 (KSPVKE), 737–742 (KSPVKE), and 745–750 (KSPEKA). Phosphoserine is present on residues Ser-718, Ser-724, and Ser-738. A phosphoserine mark is found at Ser-752 and Ser-763. Repeat unit 27 spans residues 762–767 (KSPEAK). Thr-768 bears the Phosphothreonine mark. A run of 3 repeats spans residues 786-791 (KSPVKE), 794-799 (KSPEKA), and 821-826 (KSPVKE). Residues Ser-787, Ser-795, Ser-822, and Ser-888 each carry the phosphoserine modification.

The protein belongs to the intermediate filament family. In terms of assembly, forms heterodimers with NEFL; which can further hetero-oligomerize (in vitro). Forms heterodimers with INA (in vitro). There are a number of repeats of the tripeptide K-S-P, NFH is phosphorylated on a number of the serines in this motif. It is thought that phosphorylation of NFH results in the formation of interfilament cross bridges that are important in the maintenance of axonal caliber. Post-translationally, phosphorylation seems to play a major role in the functioning of the larger neurofilament polypeptides (NF-M and NF-H), the levels of phosphorylation being altered developmentally and coincidentally with a change in the neurofilament function. In terms of processing, phosphorylated in the head and rod regions by the PKC kinase PKN1, leading to the inhibition of polymerization.

The protein localises to the cytoplasm. It is found in the cytoskeleton. It localises to the cell projection. Its subcellular location is the axon. Neurofilaments usually contain three intermediate filament proteins: NEFL, NEFM, and NEFH which are involved in the maintenance of neuronal caliber. NEFH has an important function in mature axons that is not subserved by the two smaller NF proteins. May additionally cooperate with the neuronal intermediate filament proteins PRPH and INA to form neuronal filamentous networks. The polypeptide is Neurofilament heavy polypeptide (NEFH) (Homo sapiens (Human)).